The chain runs to 278 residues: 4-deoxy-L-threo-5-hexosulose-uronate ketol-isomerase (278 aa).

The Zn(2+) site is built by H196, H198, E203, and H245.

This sequence belongs to the KduI family. Zn(2+) is required as a cofactor.

It catalyses the reaction 5-dehydro-4-deoxy-D-glucuronate = 3-deoxy-D-glycero-2,5-hexodiulosonate. It functions in the pathway glycan metabolism; pectin degradation; 2-dehydro-3-deoxy-D-gluconate from pectin: step 4/5. Functionally, catalyzes the isomerization of 5-dehydro-4-deoxy-D-glucuronate to 3-deoxy-D-glycero-2,5-hexodiulosonate. The protein is 4-deoxy-L-threo-5-hexosulose-uronate ketol-isomerase of Shigella boydii serotype 4 (strain Sb227).